The chain runs to 181 residues: LEM domain-containing protein 1 (181 aa).

The LEM domain occupies 1–45 (MVDVKCLSDCKLQNQLEKLGFSPGPILPSTRKLYEKKLVQLLVSP). Residues 152–172 (FPVGLKLAVLGIFIIVVFVYL) traverse the membrane as a helical; Signal-anchor for type II membrane protein segment.

In terms of tissue distribution, testis-specific. Isoform 6 is detected in 17 of 18 colon cancer tissues examined.

It localises to the membrane. The sequence is that of LEM domain-containing protein 1 (LEMD1) from Homo sapiens (Human).